The chain runs to 693 residues: Oxysterol-binding protein-related protein 2B (693 aa).

Over residues 1–15 (MPLTRSKSLPATENG) the composition is skewed to polar residues. The tract at residues 1 to 22 (MPLTRSKSLPATENGGSDRETL) is disordered. The 130-residue stretch at 25–154 (GRSVAGILYK…WLQALASTRG (130 aa)) folds into the PH domain. A coiled-coil region spans residues 207-239 (EVQEQIKLLHEERKKLLDALRQLEMANLEAEAS). 2 disordered regions span residues 256 to 298 (LGRG…GEPD) and 600 to 639 (EKLPPTDSRLRPDQRHLENGEYEKANEEKQRLERRQRMSR). Residues 274–284 (QEFEDISEEDE) are compositionally biased toward acidic residues. Basic and acidic residues-rich tracts occupy residues 285–294 (ASFHDTKESF) and 600–635 (EKLPPTDSRLRPDQRHLENGEYEKANEEKQRLERRQ). Positions 612-643 (DQRHLENGEYEKANEEKQRLERRQRMSRQIQE) form a coiled coil.

Belongs to the OSBP family. In terms of tissue distribution, expressed in roots, leaves, stems and flowers.

Functionally, may be involved in the transport of sterols. This is Oxysterol-binding protein-related protein 2B (ORP2B) from Arabidopsis thaliana (Mouse-ear cress).